A 355-amino-acid polypeptide reads, in one-letter code: Guanine nucleotide-binding protein G(i) subunit alpha-2 (355 aa).

Residue Gly-2 is the site of N-myristoyl glycine attachment. Residue Cys-3 is the site of S-palmitoyl cysteine attachment. The region spanning 32–355 (REVKLLLLGA…KNNLKDCGLF (324 aa)) is the G-alpha domain. The segment at 35-48 (KLLLLGAGESGKST) is G1 motif. GTP contacts are provided by residues 40–47 (GAGESGKS), 176–182 (LRTRVKT), 201–205 (DVGGQ), 270–273 (NKKD), and Ala-327. Residues Ser-47 and Thr-182 each coordinate Mg(2+). The segment at 174-182 (DVLRTRVKT) is G2 motif. The G3 motif stretch occupies residues 197–206 (FKMFDVGGQR). The G4 motif stretch occupies residues 266-273 (ILFLNKKD). Positions 325-330 (TCATDT) are G5 motif.

This sequence belongs to the G-alpha family. G(i/o/t/z) subfamily. As to quaternary structure, g proteins are composed of 3 units; alpha, beta and gamma. The alpha chain contains the guanine nucleotide binding site. In this context, interacts with GNB2. Interacts with UNC5B. Interacts with GPSM1. Interacts with RGS12 and RGS14. Interacts (inactive GDP-bound form) with NUCB1 (via GBA motif); the interaction leads to activation of GNAI3. Interacts (inactive GDP-bound form) with CCDC88C/DAPLE (via GBA motif). Interacts (inactive GDP-bound form) with CCDC8A/GIV (via GBA motif). Interacts with CXCR1 and CXCR2.

It localises to the cytoplasm. The protein localises to the cytoskeleton. The protein resides in the microtubule organizing center. It is found in the centrosome. Its subcellular location is the cell membrane. It localises to the membrane. Its function is as follows. Guanine nucleotide-binding proteins (G proteins) are involved as modulators or transducers in various transmembrane signaling systems. The G(i) proteins are involved in hormonal regulation of adenylate cyclase: they inhibit the cyclase in response to beta-adrenergic stimuli. May play a role in cell division. The protein is Guanine nucleotide-binding protein G(i) subunit alpha-2 (GNAI2) of Canis lupus familiaris (Dog).